Here is a 49-residue protein sequence, read N- to C-terminus: Large ribosomal subunit protein bL33B (49 aa).

Belongs to the bacterial ribosomal protein bL33 family.

The sequence is that of Large ribosomal subunit protein bL33B from Limosilactobacillus reuteri subsp. reuteri (strain JCM 1112) (Lactobacillus reuteri).